A 446-amino-acid polypeptide reads, in one-letter code: Probable glucan endo-1,3-beta-glucosidase eglC (446 aa).

An N-terminal signal peptide occupies residues 1-18 (MQFTHLVALALALATSEA). Catalysis depends on E128, which acts as the Proton donor. Residue N183 is glycosylated (N-linked (GlcNAc...) asparagine). E239 acts as the Nucleophile in catalysis. Residues N364 and N370 are each glycosylated (N-linked (GlcNAc...) asparagine). Residues 393-416 (SSGAGASGASGQSSSSTGSSSAPS) form a disordered region. Residues 401 to 416 (ASGQSSSSTGSSSAPS) are compositionally biased toward low complexity. A lipid anchor (GPI-anchor amidated asparagine) is attached at N423. A propeptide spans 424 to 446 (AASGLSGSIFGAVVAVCLALAAL) (removed in mature form).

The protein belongs to the glycosyl hydrolase 17 family. In terms of processing, the GPI-anchor is attached to the protein in the endoplasmic reticulum and serves to target the protein to the cell surface. There, the glucosamine-inositol phospholipid moiety is cleaved off and the GPI-modified mannoprotein is covalently attached via its lipidless GPI glycan remnant to the 1,6-beta-glucan of the outer cell wall layer.

The protein localises to the cell membrane. It localises to the secreted. The protein resides in the cell wall. It carries out the reaction Hydrolysis of (1-&gt;3)-beta-D-glucosidic linkages in (1-&gt;3)-beta-D-glucans.. Glucanases play a role in cell expansion during growth, in cell-cell fusion during mating, and in spore release during sporulation. This enzyme may be involved in beta-glucan degradation and also function biosynthetically as a transglycosylase. This chain is Probable glucan endo-1,3-beta-glucosidase eglC (eglC), found in Aspergillus fumigatus (strain ATCC MYA-4609 / CBS 101355 / FGSC A1100 / Af293) (Neosartorya fumigata).